Reading from the N-terminus, the 277-residue chain is Large ribosomal subunit protein uL2 (277 aa).

The disordered stretch occupies residues 222 to 277 (GSVMNPNDHPHGGGEGKAPVGRKAPSTPWGKPALGLKTRNKKAKSDKLIVRRRNEK). Positions 264–277 (AKSDKLIVRRRNEK) are enriched in basic and acidic residues.

This sequence belongs to the universal ribosomal protein uL2 family. As to quaternary structure, part of the 50S ribosomal subunit. Forms a bridge to the 30S subunit in the 70S ribosome.

Functionally, one of the primary rRNA binding proteins. Required for association of the 30S and 50S subunits to form the 70S ribosome, for tRNA binding and peptide bond formation. It has been suggested to have peptidyltransferase activity; this is somewhat controversial. Makes several contacts with the 16S rRNA in the 70S ribosome. The sequence is that of Large ribosomal subunit protein uL2 from Streptococcus thermophilus (strain CNRZ 1066).